We begin with the raw amino-acid sequence, 626 residues long: Phosphomethylpyrimidine synthase (626 aa).

The tract at residues 1-22 (MTKQEKAINLSESAQVDQQSVQ) is disordered. Residues 10–22 (LSESAQVDQQSVQ) are compositionally biased toward polar residues. Substrate contacts are provided by residues Asn-232, Met-261, Tyr-290, His-326, 346–348 (SRG), 387–390 (DGLR), and Glu-426. His-430 serves as a coordination point for Zn(2+). Tyr-453 contributes to the substrate binding site. Residue His-494 coordinates Zn(2+). [4Fe-4S] cluster-binding residues include Cys-574, Cys-577, and Cys-582.

The protein belongs to the ThiC family. Homodimer. [4Fe-4S] cluster serves as cofactor.

The enzyme catalyses 5-amino-1-(5-phospho-beta-D-ribosyl)imidazole + S-adenosyl-L-methionine = 4-amino-2-methyl-5-(phosphooxymethyl)pyrimidine + CO + 5'-deoxyadenosine + formate + L-methionine + 3 H(+). It functions in the pathway cofactor biosynthesis; thiamine diphosphate biosynthesis. In terms of biological role, catalyzes the synthesis of the hydroxymethylpyrimidine phosphate (HMP-P) moiety of thiamine from aminoimidazole ribotide (AIR) in a radical S-adenosyl-L-methionine (SAM)-dependent reaction. The sequence is that of Phosphomethylpyrimidine synthase from Pseudomonas putida (strain ATCC 47054 / DSM 6125 / CFBP 8728 / NCIMB 11950 / KT2440).